Reading from the N-terminus, the 338-residue chain is Aspartate--ammonia ligase (338 aa).

This sequence belongs to the class-II aminoacyl-tRNA synthetase family. AsnA subfamily.

The protein localises to the cytoplasm. The catalysed reaction is L-aspartate + NH4(+) + ATP = L-asparagine + AMP + diphosphate + H(+). It participates in amino-acid biosynthesis; L-asparagine biosynthesis; L-asparagine from L-aspartate (ammonia route): step 1/1. In Lactobacillus delbrueckii subsp. bulgaricus (strain ATCC 11842 / DSM 20081 / BCRC 10696 / JCM 1002 / NBRC 13953 / NCIMB 11778 / NCTC 12712 / WDCM 00102 / Lb 14), this protein is Aspartate--ammonia ligase.